We begin with the raw amino-acid sequence, 256 residues long: Pimeloyl-[acyl-carrier protein] methyl ester esterase (256 aa).

The AB hydrolase-1 domain occupies 15–242 (HLVLLHGWGL…AAHAPFISHP (228 aa)). Substrate contacts are provided by residues W22, 82–83 (SL), and 143–147 (FLALQ). S82 acts as the Nucleophile in catalysis. Catalysis depends on residues D207 and H235. H235 contacts substrate.

It belongs to the AB hydrolase superfamily. Carboxylesterase BioH family. In terms of assembly, monomer.

It is found in the cytoplasm. The catalysed reaction is 6-carboxyhexanoyl-[ACP] methyl ester + H2O = 6-carboxyhexanoyl-[ACP] + methanol + H(+). It functions in the pathway cofactor biosynthesis; biotin biosynthesis. Its function is as follows. The physiological role of BioH is to remove the methyl group introduced by BioC when the pimeloyl moiety is complete. It allows to synthesize pimeloyl-ACP via the fatty acid synthetic pathway through the hydrolysis of the ester bonds of pimeloyl-ACP esters. This Shigella boydii serotype 18 (strain CDC 3083-94 / BS512) protein is Pimeloyl-[acyl-carrier protein] methyl ester esterase.